Here is a 509-residue protein sequence, read N- to C-terminus: Proton-gated ion channel subunit pbo-5 (509 aa).

The first 21 residues, 1–21 (MTRLSILQHLLTFLILSKINA), serve as a signal peptide directing secretion. The Extracellular segment spans residues 22 to 275 (TSTTESYFDS…ISLKRRPLFY (254 aa)). Cysteines 193 and 207 form a disulfide. A run of 3 helical transmembrane segments spans residues 276 to 296 (MVTLTFPSYIMCAISVVGLFA), 310 to 330 (LGVTAILTMAVLSLVVSEKVP), and 336 to 356 (VPLLVAYFLFNMVIVSIAAMT). The Cytoplasmic portion of the chain corresponds to 357–487 (TGIVMKVHRL…GYVRISERLD (131 aa)). A helical membrane pass occupies residues 488-508 (ILFMFLFLSTVTIPVAVLFYL).

The protein belongs to the ligand-gated ion channel (TC 1.A.9) family. Acetylcholine receptor (TC 1.A.9.1) subfamily. In terms of assembly, the functional channel is a heterooligomer of pbo-5 and pbo-6. May self-associate to form homooligomers with negligible ion channel activity. As to expression, expressed in the posterior body muscles. Also detected in the RIFL, RIFR and RIS head neurons.

It localises to the membrane. In terms of biological role, forms a proton-gated ion channel with pbo-6 that is activated by acidification of the posterior coelomic space, leading to posterior body wall muscle contraction (pBoc) during the defecation cycle. Probably by regulating the defecation motor program, required for fatty acid uptake by intestinal cells. Does not bind neurotransmitters such as acetylcholine, gamma-aminobutyric acid, glycine, serotonin, glutamate or choline. This Caenorhabditis elegans protein is Proton-gated ion channel subunit pbo-5.